A 339-amino-acid chain; its full sequence is Tetraacyldisaccharide 4'-kinase (339 aa).

Residue 44 to 51 (TVGGTGKT) participates in ATP binding.

Belongs to the LpxK family.

The enzyme catalyses a lipid A disaccharide + ATP = a lipid IVA + ADP + H(+). The protein operates within glycolipid biosynthesis; lipid IV(A) biosynthesis; lipid IV(A) from (3R)-3-hydroxytetradecanoyl-[acyl-carrier-protein] and UDP-N-acetyl-alpha-D-glucosamine: step 6/6. Its function is as follows. Transfers the gamma-phosphate of ATP to the 4'-position of a tetraacyldisaccharide 1-phosphate intermediate (termed DS-1-P) to form tetraacyldisaccharide 1,4'-bis-phosphate (lipid IVA). The sequence is that of Tetraacyldisaccharide 4'-kinase from Bdellovibrio bacteriovorus (strain ATCC 15356 / DSM 50701 / NCIMB 9529 / HD100).